Reading from the N-terminus, the 242-residue chain is MSQITMRQMIEAGVHFGHQTRFWNPKMAQYIFGARNKIHIVNLEKTLPMFQDAQEAVRRLVANKGTVLFVGTKRQARDIIREEATRAGMPFVDYRWLGGMLTNYKTVKQSIKRLEEKTAALENAAESGFSKKEILEMQRDVEKLERSLGGIKNMKGLPDAIFVIDTGYQKGTLVETEKLGIPVIAVVDTNNSPDGVKYVIPGNDDSAKAIRLYCRGIADAVLEGKNQALQETVAAAQEAAAE.

Belongs to the universal ribosomal protein uS2 family.

The protein is Small ribosomal subunit protein uS2 of Neisseria meningitidis serogroup C (strain 053442).